A 247-amino-acid chain; its full sequence is UPF0246 protein LSEI_2080 (247 aa).

This sequence belongs to the UPF0246 family.

The chain is UPF0246 protein LSEI_2080 from Lacticaseibacillus paracasei (strain ATCC 334 / BCRC 17002 / CCUG 31169 / CIP 107868 / KCTC 3260 / NRRL B-441) (Lactobacillus paracasei).